Consider the following 280-residue polypeptide: 4-diphosphocytidyl-2-C-methyl-D-erythritol kinase (280 aa).

K11 is an active-site residue. ATP is bound at residue 95 to 105; that stretch reads PVAAGLGGGSS. Residue D137 is part of the active site.

The protein belongs to the GHMP kinase family. IspE subfamily.

The enzyme catalyses 4-CDP-2-C-methyl-D-erythritol + ATP = 4-CDP-2-C-methyl-D-erythritol 2-phosphate + ADP + H(+). It participates in isoprenoid biosynthesis; isopentenyl diphosphate biosynthesis via DXP pathway; isopentenyl diphosphate from 1-deoxy-D-xylulose 5-phosphate: step 3/6. Catalyzes the phosphorylation of the position 2 hydroxy group of 4-diphosphocytidyl-2C-methyl-D-erythritol. This chain is 4-diphosphocytidyl-2-C-methyl-D-erythritol kinase, found in Pelobacter propionicus (strain DSM 2379 / NBRC 103807 / OttBd1).